Reading from the N-terminus, the 429-residue chain is Glutamate-1-semialdehyde 2,1-aminomutase 1 (429 aa).

Lys-268 is subject to N6-(pyridoxal phosphate)lysine.

This sequence belongs to the class-III pyridoxal-phosphate-dependent aminotransferase family. HemL subfamily. As to quaternary structure, homodimer. The cofactor is pyridoxal 5'-phosphate.

The protein resides in the cytoplasm. The enzyme catalyses (S)-4-amino-5-oxopentanoate = 5-aminolevulinate. Its pathway is porphyrin-containing compound metabolism; protoporphyrin-IX biosynthesis; 5-aminolevulinate from L-glutamyl-tRNA(Glu): step 2/2. The chain is Glutamate-1-semialdehyde 2,1-aminomutase 1 from Staphylococcus saprophyticus subsp. saprophyticus (strain ATCC 15305 / DSM 20229 / NCIMB 8711 / NCTC 7292 / S-41).